Consider the following 199-residue polypeptide: NAD(P)H dehydrogenase (quinone) (199 aa).

One can recognise a Flavodoxin-like domain in the interval 4–190; that stretch reads MLVLYYSAYG…DGARFQGRRV (187 aa). Residues 10-15 and 78-80 each bind FMN; these read SAYGYM and TRY. Tyr12 is a binding site for NAD(+). Trp98 contacts substrate. FMN-binding positions include 113-119 and His134; that span reads STATQHG. Residues 157–181 form a disordered region; sequence GGAPYGMTTTADGDGSRQPSAQELD. Residues 163 to 177 are compositionally biased toward polar residues; that stretch reads MTTTADGDGSRQPSA.

The protein belongs to the WrbA family. Requires FMN as cofactor.

The enzyme catalyses a quinone + NADH + H(+) = a quinol + NAD(+). It carries out the reaction a quinone + NADPH + H(+) = a quinol + NADP(+). This chain is NAD(P)H dehydrogenase (quinone), found in Brucella melitensis biotype 2 (strain ATCC 23457).